Reading from the N-terminus, the 313-residue chain is Acetaldehyde dehydrogenase 2 (313 aa).

12–15 (SGNI) is an NAD(+) binding site. Catalysis depends on Cys-132, which acts as the Acyl-thioester intermediate. Residues 163–171 (SAGPGTRAN) and Asn-287 contribute to the NAD(+) site.

Belongs to the acetaldehyde dehydrogenase family.

It catalyses the reaction acetaldehyde + NAD(+) + CoA = acetyl-CoA + NADH + H(+). This is Acetaldehyde dehydrogenase 2 (amnH) from Paraburkholderia xenovorans (strain LB400).